Consider the following 256-residue polypeptide: Phosphatidylglycerol--prolipoprotein diacylglyceryl transferase (256 aa).

The next 3 membrane-spanning stretches (helical) occupy residues 19–39, 56–76, and 91–111; these read VHWYGLMYLIGFIGAWLLGYW, LIFYSALGVILGGRVGYMLFY, and IWEGGMSFHGGLLGVVIAAWL. Arg-139 contributes to the a 1,2-diacyl-sn-glycero-3-phospho-(1'-sn-glycerol) binding site. The chain crosses the membrane as a helical span at residues 231-251; the sequence is FGWLTMGQVLSIPMLLIGIWL.

The protein belongs to the Lgt family.

The protein localises to the cell inner membrane. The enzyme catalyses L-cysteinyl-[prolipoprotein] + a 1,2-diacyl-sn-glycero-3-phospho-(1'-sn-glycerol) = an S-1,2-diacyl-sn-glyceryl-L-cysteinyl-[prolipoprotein] + sn-glycerol 1-phosphate + H(+). Its pathway is protein modification; lipoprotein biosynthesis (diacylglyceryl transfer). In terms of biological role, catalyzes the transfer of the diacylglyceryl group from phosphatidylglycerol to the sulfhydryl group of the N-terminal cysteine of a prolipoprotein, the first step in the formation of mature lipoproteins. This is Phosphatidylglycerol--prolipoprotein diacylglyceryl transferase from Legionella pneumophila (strain Paris).